The chain runs to 342 residues: L-threonine 3-dehydrogenase (342 aa).

Position 38 (Cys-38) interacts with Zn(2+). Residues Thr-40 and His-43 each act as charge relay system in the active site. The Zn(2+) site is built by His-63, Glu-64, Cys-93, Cys-96, Cys-99, and Cys-107. NAD(+) contacts are provided by residues Ile-175, Asp-195, Arg-200, 262–264, and 286–287; these read LGI and IY.

This sequence belongs to the zinc-containing alcohol dehydrogenase family. As to quaternary structure, homotetramer. Zn(2+) is required as a cofactor.

The protein localises to the cytoplasm. The enzyme catalyses L-threonine + NAD(+) = (2S)-2-amino-3-oxobutanoate + NADH + H(+). It participates in amino-acid degradation; L-threonine degradation via oxydo-reductase pathway; glycine from L-threonine: step 1/2. Functionally, catalyzes the NAD(+)-dependent oxidation of L-threonine to 2-amino-3-ketobutyrate. The chain is L-threonine 3-dehydrogenase from Aeromonas salmonicida (strain A449).